The following is a 129-amino-acid chain: Histone H2A-III (129 aa).

The disordered stretch occupies residues 1–22; the sequence is MSGRGKQGGKARAKAKSRSSRA. An N-acetylserine modification is found at Ser-2. Ser-2 carries the phosphoserine modification. Lys-6 is modified (N6-(2-hydroxyisobutyryl)lysine). N6-acetyllysine occurs at positions 6 and 10. Positions 7 to 19 are enriched in basic residues; it reads QGGKARAKAKSRS. Lys-10 carries the post-translational modification N6-(2-hydroxyisobutyryl)lysine; alternate. Residue Lys-10 is modified to N6-lactoyllysine; alternate. Lys-10 carries the post-translational modification N6-succinyllysine. Glycyl lysine isopeptide (Lys-Gly) (interchain with G-Cter in ubiquitin) cross-links involve residues Lys-14 and Lys-16. Lys-37 carries the post-translational modification N6-(2-hydroxyisobutyryl)lysine; alternate. Lys-75 and Lys-76 each carry N6-(2-hydroxyisobutyryl)lysine. N6-(2-hydroxyisobutyryl)lysine; alternate is present on Lys-96. Position 96 is an N6-succinyllysine (Lys-96). The residue at position 96 (Lys-96) is an N6-glutaryllysine; alternate. Lys-100 bears the N6-glutaryllysine mark. Position 105 is an N5-methylglutamine (Gln-105). Residue Lys-119 is modified to N6-(2-hydroxyisobutyryl)lysine; alternate. N6-glutaryllysine; alternate occurs at positions 119 and 120. Lys-120 is covalently cross-linked (Glycyl lysine isopeptide (Lys-Gly) (interchain with G-Cter in ubiquitin)).

This sequence belongs to the histone H2A family. As to quaternary structure, the nucleosome is a histone octamer containing two molecules each of H2A, H2B, H3 and H4 assembled in one H3-H4 heterotetramer and two H2A-H2B heterodimers. The octamer wraps approximately 147 bp of DNA. Post-translationally, monoubiquitination of Lys-120 (H2AK119Ub) gives a specific tag for epigenetic transcriptional repression. Following DNA double-strand breaks (DSBs), it is ubiquitinated through 'Lys-63' linkage of ubiquitin moieties, leading to the recruitment of repair proteins to sites of DNA damage. H2AK119Ub and ionizing radiation-induced 'Lys-63'-linked ubiquitination are distinct events. Phosphorylation on Ser-2 is enhanced during mitosis. Phosphorylation on Ser-2 directly represses transcription. In terms of processing, glutamine methylation at Gln-105 (H2AQ104me) by FBL is specifically dedicated to polymerase I. It is present at 35S ribosomal DNA locus and impairs binding of the FACT complex.

The protein localises to the nucleus. It localises to the chromosome. In terms of biological role, core component of nucleosome. Nucleosomes wrap and compact DNA into chromatin, limiting DNA accessibility to the cellular machineries which require DNA as a template. Histones thereby play a central role in transcription regulation, DNA repair, DNA replication and chromosomal stability. DNA accessibility is regulated via a complex set of post-translational modifications of histones, also called histone code, and nucleosome remodeling. The sequence is that of Histone H2A-III from Gallus gallus (Chicken).